A 219-amino-acid chain; its full sequence is Thiamine-phosphate synthase (219 aa).

Residues 44–48 (QFREK) and Asn-79 each bind 4-amino-2-methyl-5-(diphosphooxymethyl)pyrimidine. The Mg(2+) site is built by Asp-80 and Asp-99. Ser-117 is a binding site for 4-amino-2-methyl-5-(diphosphooxymethyl)pyrimidine. Residue 143-145 (TST) coordinates 2-[(2R,5Z)-2-carboxy-4-methylthiazol-5(2H)-ylidene]ethyl phosphate. A 4-amino-2-methyl-5-(diphosphooxymethyl)pyrimidine-binding site is contributed by Lys-146. Residues Gly-175 and 195-196 (IS) each bind 2-[(2R,5Z)-2-carboxy-4-methylthiazol-5(2H)-ylidene]ethyl phosphate.

Belongs to the thiamine-phosphate synthase family. The cofactor is Mg(2+).

The catalysed reaction is 2-[(2R,5Z)-2-carboxy-4-methylthiazol-5(2H)-ylidene]ethyl phosphate + 4-amino-2-methyl-5-(diphosphooxymethyl)pyrimidine + 2 H(+) = thiamine phosphate + CO2 + diphosphate. It catalyses the reaction 2-(2-carboxy-4-methylthiazol-5-yl)ethyl phosphate + 4-amino-2-methyl-5-(diphosphooxymethyl)pyrimidine + 2 H(+) = thiamine phosphate + CO2 + diphosphate. It carries out the reaction 4-methyl-5-(2-phosphooxyethyl)-thiazole + 4-amino-2-methyl-5-(diphosphooxymethyl)pyrimidine + H(+) = thiamine phosphate + diphosphate. It participates in cofactor biosynthesis; thiamine diphosphate biosynthesis; thiamine phosphate from 4-amino-2-methyl-5-diphosphomethylpyrimidine and 4-methyl-5-(2-phosphoethyl)-thiazole: step 1/1. Condenses 4-methyl-5-(beta-hydroxyethyl)thiazole monophosphate (THZ-P) and 2-methyl-4-amino-5-hydroxymethyl pyrimidine pyrophosphate (HMP-PP) to form thiamine monophosphate (TMP). The sequence is that of Thiamine-phosphate synthase from Bacillus thuringiensis (strain Al Hakam).